The chain runs to 172 residues: Large ribosomal subunit protein bL17 (172 aa).

Positions 153–172 are disordered; sequence AQAAEPVAAAEPATPATTAG.

Belongs to the bacterial ribosomal protein bL17 family. As to quaternary structure, part of the 50S ribosomal subunit. Contacts protein L32.

The protein is Large ribosomal subunit protein bL17 of Sorangium cellulosum (strain So ce56) (Polyangium cellulosum (strain So ce56)).